Reading from the N-terminus, the 313-residue chain is Protein-methionine-sulfoxide reductase catalytic subunit MsrP (313 aa).

The segment at residues 1-45 is a signal peptide (tat-type signal); sequence MPAYRPPHIASSEITPKSFYLSRRNFLGTAAGLAAIGLAGREAIA. Mo-molybdopterin contacts are provided by residues Asn71, 74–75, Cys128, Thr163, Asn213, Arg218, and 229–231; these read YE and GIK.

Belongs to the MsrP family. As to quaternary structure, heterodimer of a catalytic subunit (MsrP) and a heme-binding subunit (MsrQ). It depends on Mo-molybdopterin as a cofactor. In terms of processing, predicted to be exported by the Tat system. The position of the signal peptide cleavage has not been experimentally proven.

The protein resides in the periplasm. The catalysed reaction is L-methionyl-[protein] + a quinone + H2O = L-methionyl-(S)-S-oxide-[protein] + a quinol. The enzyme catalyses L-methionyl-[protein] + a quinone + H2O = L-methionyl-(R)-S-oxide-[protein] + a quinol. Its function is as follows. Part of the MsrPQ system that repairs oxidized periplasmic proteins containing methionine sulfoxide residues (Met-O), using respiratory chain electrons. Thus protects these proteins from oxidative-stress damage caused by reactive species of oxygen and chlorine generated by the host defense mechanisms. MsrPQ is essential for the maintenance of envelope integrity under bleach stress, rescuing a wide series of structurally unrelated periplasmic proteins from methionine oxidation. The catalytic subunit MsrP is non-stereospecific, being able to reduce both (R-) and (S-) diastereoisomers of methionine sulfoxide. The chain is Protein-methionine-sulfoxide reductase catalytic subunit MsrP from Agrobacterium fabrum (strain C58 / ATCC 33970) (Agrobacterium tumefaciens (strain C58)).